A 488-amino-acid chain; its full sequence is Ribulose bisphosphate carboxylase large chain (488 aa).

2 residues coordinate substrate: asparagine 127 and threonine 177. Lysine 179 acts as the Proton acceptor in catalysis. Lysine 181 contributes to the substrate binding site. Lysine 205, aspartate 207, and glutamate 208 together coordinate Mg(2+). Lysine 205 carries the post-translational modification N6-carboxylysine. Histidine 297 (proton acceptor) is an active-site residue. Residues arginine 298, histidine 330, and serine 382 each coordinate substrate.

This sequence belongs to the RuBisCO large chain family. Type I subfamily. Heterohexadecamer of 8 large chains and 8 small chains. Mg(2+) serves as cofactor.

Its subcellular location is the plastid. The protein resides in the chloroplast. The enzyme catalyses 2 (2R)-3-phosphoglycerate + 2 H(+) = D-ribulose 1,5-bisphosphate + CO2 + H2O. It catalyses the reaction D-ribulose 1,5-bisphosphate + O2 = 2-phosphoglycolate + (2R)-3-phosphoglycerate + 2 H(+). Its function is as follows. RuBisCO catalyzes two reactions: the carboxylation of D-ribulose 1,5-bisphosphate, the primary event in carbon dioxide fixation, as well as the oxidative fragmentation of the pentose substrate in the photorespiration process. Both reactions occur simultaneously and in competition at the same active site. This chain is Ribulose bisphosphate carboxylase large chain (rbcL), found in Pyropia haitanensis (Red seaweed).